The primary structure comprises 340 residues: Protein-arginine kinase (340 aa).

Positions 21–242 constitute a Phosphagen kinase C-terminal domain; it reads VVLSSRIRLA…EQIIMQERVA (222 aa). Residues 24–28, H79, R113, 164–168, and 195–200 contribute to the ATP site; these read SSRIR, RASVM, and RGIYGE.

This sequence belongs to the ATP:guanido phosphotransferase family.

It carries out the reaction L-arginyl-[protein] + ATP = N(omega)-phospho-L-arginyl-[protein] + ADP + H(+). Functionally, catalyzes the specific phosphorylation of arginine residues in proteins. This Listeria innocua serovar 6a (strain ATCC BAA-680 / CLIP 11262) protein is Protein-arginine kinase.